The chain runs to 674 residues: Probable nucleolar GTP-binding protein 1 (674 aa).

In terms of domain architecture, OBG-type G spans 169–346 (RTLLLTGYPN…VKDTACSILF (178 aa)). GTP-binding positions include 175-182 (GYPNVGKS), 221-225 (DTPGI), and 289-292 (NKID). The segment covering 518 to 527 (RINHQIKDSS) has biased composition (basic and acidic residues). 2 disordered regions span residues 518–538 (RINH…RRGI) and 564–674 (VRDH…NDFR). A compositionally biased stretch (basic residues) spans 570-580 (SRISGKKRSRS). 2 stretches are compositionally biased toward basic and acidic residues: residues 619–633 (GFHD…DKLD) and 641–653 (NQDG…DRHV).

It belongs to the TRAFAC class OBG-HflX-like GTPase superfamily. OBG GTPase family. NOG subfamily.

It localises to the nucleus. It is found in the nucleolus. Involved in the biogenesis of the 60S ribosomal subunit. The protein is Probable nucleolar GTP-binding protein 1 (nog1) of Dictyostelium discoideum (Social amoeba).